The primary structure comprises 323 residues: Thiamine-monophosphate kinase (323 aa).

Asp30, Ser45, Thr46, and Asp47 together coordinate Mg(2+). His54 lines the substrate pocket. Residues Asp75 and Asp122 each coordinate Mg(2+). ATP contacts are provided by residues 121 to 122 (GD) and Arg146. Position 212 (Asp212) interacts with Mg(2+). Ser214 contributes to the ATP binding site. Asp215 is a binding site for Mg(2+). Residues Glu263 and Phe319 each contribute to the substrate site.

The protein belongs to the thiamine-monophosphate kinase family.

The catalysed reaction is thiamine phosphate + ATP = thiamine diphosphate + ADP. It participates in cofactor biosynthesis; thiamine diphosphate biosynthesis; thiamine diphosphate from thiamine phosphate: step 1/1. Functionally, catalyzes the ATP-dependent phosphorylation of thiamine-monophosphate (TMP) to form thiamine-pyrophosphate (TPP), the active form of vitamin B1. This Buchnera aphidicola subsp. Acyrthosiphon pisum (strain APS) (Acyrthosiphon pisum symbiotic bacterium) protein is Thiamine-monophosphate kinase.